Consider the following 107-residue polypeptide: Large ribosomal subunit protein eL33B (107 aa).

The residue at position 2 (A2) is an N-acetylalanine; partial. K47 participates in a covalent cross-link: Glycyl lysine isopeptide (Lys-Gly) (interchain with G-Cter in ubiquitin).

The protein belongs to the eukaryotic ribosomal protein eL33 family. As to quaternary structure, component of the large ribosomal subunit (LSU). Mature yeast ribosomes consist of a small (40S) and a large (60S) subunit. The 40S small subunit contains 1 molecule of ribosomal RNA (18S rRNA) and 33 different proteins (encoded by 57 genes). The large 60S subunit contains 3 rRNA molecules (25S, 5.8S and 5S rRNA) and 46 different proteins (encoded by 81 genes). In terms of processing, N-terminally acetylated by acetyltransferase NatA.

It is found in the cytoplasm. In terms of biological role, component of the ribosome, a large ribonucleoprotein complex responsible for the synthesis of proteins in the cell. The small ribosomal subunit (SSU) binds messenger RNAs (mRNAs) and translates the encoded message by selecting cognate aminoacyl-transfer RNA (tRNA) molecules. The large subunit (LSU) contains the ribosomal catalytic site termed the peptidyl transferase center (PTC), which catalyzes the formation of peptide bonds, thereby polymerizing the amino acids delivered by tRNAs into a polypeptide chain. The nascent polypeptides leave the ribosome through a tunnel in the LSU and interact with protein factors that function in enzymatic processing, targeting, and the membrane insertion of nascent chains at the exit of the ribosomal tunnel. The protein is Large ribosomal subunit protein eL33B of Saccharomyces cerevisiae (strain ATCC 204508 / S288c) (Baker's yeast).